The following is a 176-amino-acid chain: Probable chorismate pyruvate-lyase (176 aa).

Residues Arg70, Leu108, and Glu166 each coordinate substrate.

It belongs to the UbiC family.

It is found in the cytoplasm. The enzyme catalyses chorismate = 4-hydroxybenzoate + pyruvate. It participates in cofactor biosynthesis; ubiquinone biosynthesis. Functionally, removes the pyruvyl group from chorismate, with concomitant aromatization of the ring, to provide 4-hydroxybenzoate (4HB) for the ubiquinone pathway. This chain is Probable chorismate pyruvate-lyase, found in Dechloromonas aromatica (strain RCB).